The chain runs to 499 residues: Probable cytosol aminopeptidase (499 aa).

The Mn(2+) site is built by K263 and D268. K275 is an active-site residue. Mn(2+)-binding residues include D286, D345, and E347. R349 is a catalytic residue.

It belongs to the peptidase M17 family. Mn(2+) serves as cofactor.

Its subcellular location is the cytoplasm. It carries out the reaction Release of an N-terminal amino acid, Xaa-|-Yaa-, in which Xaa is preferably Leu, but may be other amino acids including Pro although not Arg or Lys, and Yaa may be Pro. Amino acid amides and methyl esters are also readily hydrolyzed, but rates on arylamides are exceedingly low.. The catalysed reaction is Release of an N-terminal amino acid, preferentially leucine, but not glutamic or aspartic acids.. Its function is as follows. Presumably involved in the processing and regular turnover of intracellular proteins. Catalyzes the removal of unsubstituted N-terminal amino acids from various peptides. This is Probable cytosol aminopeptidase from Bradyrhizobium sp. (strain BTAi1 / ATCC BAA-1182).